The sequence spans 291 residues: ATP synthase gamma chain (291 aa).

This sequence belongs to the ATPase gamma chain family. As to quaternary structure, F-type ATPases have 2 components, CF(1) - the catalytic core - and CF(0) - the membrane proton channel. CF(1) has five subunits: alpha(3), beta(3), gamma(1), delta(1), epsilon(1). CF(0) has three main subunits: a, b and c.

The protein localises to the cell inner membrane. Functionally, produces ATP from ADP in the presence of a proton gradient across the membrane. The gamma chain is believed to be important in regulating ATPase activity and the flow of protons through the CF(0) complex. This Cupriavidus metallidurans (strain ATCC 43123 / DSM 2839 / NBRC 102507 / CH34) (Ralstonia metallidurans) protein is ATP synthase gamma chain.